We begin with the raw amino-acid sequence, 524 residues long: Excitatory amino acid transporter 3 (524 aa).

At Met-1–Asn-18 the chain is on the cytoplasmic side. Residues Trp-19–Val-38 traverse the membrane as a helical segment. The Extracellular portion of the chain corresponds to Arg-39–Arg-61. Asn-43 carries an N-linked (GlcNAc...) asparagine glycan. Residues Met-62–Leu-82 form a helical membrane-spanning segment. Residues Asp-83–Arg-93 are Cytoplasmic-facing. Residues Ala-94 to Val-114 traverse the membrane as a helical segment. Tyr-98, Thr-101, and Thr-102 together coordinate Na(+). The Extracellular segment spans residues Ser-115–Met-205. Asn-178 and Asn-195 each carry an N-linked (GlcNAc...) asparagine glycan. Residues Tyr-206 to Met-229 traverse the membrane as a helical segment. The Cytoplasmic segment spans residues Gly-230 to Asp-238. The helical transmembrane segment at Phe-239–Ile-266 threads the bilayer. Residues Ala-267–Met-286 are Extracellular-facing. Residues Ala-287 to Val-308 traverse the membrane as a helical segment. Topologically, residues Val-309–Pro-313 are cytoplasmic. Residues Phe-314–Ala-344 constitute an intramembrane region (discontinuously helical). The L-aspartate site is built by Ser-331 and Ser-333. The Cytoplasmic segment spans residues Glu-345–Arg-353. Residues Ile-354–Phe-380 form a helical membrane-spanning segment. Positions 362, 364, 366, and 368 each coordinate Na(+). Thr-370 is an L-aspartate binding site. Residues Ile-381 to Gln-393 lie on the Extracellular side of the membrane. An intramembrane region (discontinuously helical) is located at residues Ile-394 to Gly-427. Ser-405, Ile-406, and Ala-408 together coordinate Na(+). Residue Val-411 coordinates L-aspartate. Topologically, residues Leu-428–Asp-440 are extracellular. Residues Trp-441 to Val-462 traverse the membrane as a helical segment. The L-aspartate site is built by Arg-447, Thr-448, and Asn-451. Asn-451 and Asp-455 together coordinate Na(+). Residues Glu-463 to Phe-524 lie on the Cytoplasmic side of the membrane. Ser-517 and Ser-522 each carry phosphoserine.

This sequence belongs to the dicarboxylate/amino acid:cation symporter (DAACS) (TC 2.A.23) family. SLC1A1 subfamily. As to quaternary structure, homotrimer. Interacts with ARL6IP5. Interacts with RTN2 (via N-terminus); the interaction promotes cell surface expression of SLC1A1. Interacts with SORCS2; this interaction is important for normal expression at the cell membrane. Post-translationally, glycosylated. As to expression, expressed in all tissues tested including liver, muscle, testis, ovary, retinoblastoma cell line, neurons and brain (in which there was dense expression in substantia nigra, red nucleus, hippocampus and in cerebral cortical layers).

Its subcellular location is the cell membrane. The protein localises to the apical cell membrane. The protein resides in the synapse. It is found in the synaptosome. It localises to the early endosome membrane. Its subcellular location is the late endosome membrane. The protein localises to the recycling endosome membrane. The catalysed reaction is K(+)(in) + L-glutamate(out) + 3 Na(+)(out) + H(+)(out) = K(+)(out) + L-glutamate(in) + 3 Na(+)(in) + H(+)(in). It carries out the reaction K(+)(in) + L-aspartate(out) + 3 Na(+)(out) + H(+)(out) = K(+)(out) + L-aspartate(in) + 3 Na(+)(in) + H(+)(in). The enzyme catalyses D-aspartate(out) + K(+)(in) + 3 Na(+)(out) + H(+)(out) = D-aspartate(in) + K(+)(out) + 3 Na(+)(in) + H(+)(in). It catalyses the reaction K(+)(in) + L-cysteine(out) + 3 Na(+)(out) + H(+)(out) = K(+)(out) + L-cysteine(in) + 3 Na(+)(in) + H(+)(in). Its function is as follows. Sodium-dependent, high-affinity amino acid transporter that mediates the uptake of L-glutamate and also L-aspartate and D-aspartate. Can also transport L-cysteine. Functions as a symporter that transports one amino acid molecule together with two or three Na(+) ions and one proton, in parallel with the counter-transport of one K(+) ion. Mediates Cl(-) flux that is not coupled to amino acid transport; this avoids the accumulation of negative charges due to aspartate and Na(+) symport. Plays an important role in L-glutamate and L-aspartate reabsorption in renal tubuli. Plays a redundant role in the rapid removal of released glutamate from the synaptic cleft, which is essential for terminating the postsynaptic action of glutamate. Contributes to glutathione biosynthesis and protection against oxidative stress via its role in L-glutamate and L-cysteine transport. Negatively regulated by ARL6IP5. The chain is Excitatory amino acid transporter 3 from Homo sapiens (Human).